A 226-amino-acid chain; its full sequence is Ribonuclease 3 (226 aa).

The RNase III domain maps to 2–129; sequence IESISKIIKY…LIGAIYLDGG (128 aa). Glutamate 42 provides a ligand contact to Mg(2+). Aspartate 46 is a catalytic residue. Asparagine 115 and glutamate 118 together coordinate Mg(2+). Glutamate 118 is a catalytic residue. A DRBM domain is found at 154-223; sequence DAKTILQELV…ASLMLNQIHN (70 aa).

Belongs to the ribonuclease III family. Homodimer. Mg(2+) serves as cofactor.

It localises to the cytoplasm. It catalyses the reaction Endonucleolytic cleavage to 5'-phosphomonoester.. In terms of biological role, digests double-stranded RNA. Involved in the processing of primary rRNA transcript to yield the immediate precursors to the large and small rRNAs (23S and 16S). Processes some mRNAs, and tRNAs when they are encoded in the rRNA operon. Processes pre-crRNA and tracrRNA of type II CRISPR loci if present in the organism. The protein is Ribonuclease 3 of Ehrlichia chaffeensis (strain ATCC CRL-10679 / Arkansas).